A 1083-amino-acid chain; its full sequence is DNA primase (1083 aa).

The CHC2-type zinc finger occupies 1022–1061 (CLRYPHRGGRTAPRTFVSLRVDHHNRLCISLAQQCFATKC).

The protein belongs to the herpesviridae DNA primase family. In terms of assembly, associates with the helicase and the primase-associated factor to form the helicase-primase factor.

The protein resides in the host nucleus. Essential component of the helicase/primase complex. Unwinds the DNA at the replication forks and generates single-stranded DNA for both leading and lagging strand synthesis. The primase initiates primer synthesis and thereby produces large amount of short RNA primers on the lagging strand that the polymerase elongates using dNTPs. The protein is DNA primase of Varicella-zoster virus (strain Oka vaccine) (HHV-3).